The chain runs to 145 residues: D-aminoacyl-tRNA deacylase (145 aa).

The Gly-cisPro motif, important for rejection of L-amino acids motif lies at 137–138; it reads GP.

It belongs to the DTD family. In terms of assembly, homodimer.

Its subcellular location is the cytoplasm. The catalysed reaction is glycyl-tRNA(Ala) + H2O = tRNA(Ala) + glycine + H(+). It catalyses the reaction a D-aminoacyl-tRNA + H2O = a tRNA + a D-alpha-amino acid + H(+). An aminoacyl-tRNA editing enzyme that deacylates mischarged D-aminoacyl-tRNAs. Also deacylates mischarged glycyl-tRNA(Ala), protecting cells against glycine mischarging by AlaRS. Acts via tRNA-based rather than protein-based catalysis; rejects L-amino acids rather than detecting D-amino acids in the active site. By recycling D-aminoacyl-tRNA to D-amino acids and free tRNA molecules, this enzyme counteracts the toxicity associated with the formation of D-aminoacyl-tRNA entities in vivo and helps enforce protein L-homochirality. In Rhodococcus jostii (strain RHA1), this protein is D-aminoacyl-tRNA deacylase.